The following is a 151-amino-acid chain: Nucleoside diphosphate kinase (151 aa).

ATP-binding residues include K11, F59, R87, T93, R104, and N114. The Pros-phosphohistidine intermediate role is filled by H117.

It belongs to the NDK family. In terms of assembly, homotetramer. The cofactor is Mg(2+).

It localises to the cytoplasm. It catalyses the reaction a 2'-deoxyribonucleoside 5'-diphosphate + ATP = a 2'-deoxyribonucleoside 5'-triphosphate + ADP. The enzyme catalyses a ribonucleoside 5'-diphosphate + ATP = a ribonucleoside 5'-triphosphate + ADP. Functionally, major role in the synthesis of nucleoside triphosphates other than ATP. The ATP gamma phosphate is transferred to the NDP beta phosphate via a ping-pong mechanism, using a phosphorylated active-site intermediate. The sequence is that of Nucleoside diphosphate kinase from Prochlorococcus marinus (strain SARG / CCMP1375 / SS120).